The following is a 226-amino-acid chain: Glutathione S-transferase-like protein gedE (226 aa).

One can recognise a GST N-terminal domain in the interval 4-85 (LLPIKVWGQG…YLVERYDTAH (82 aa)). The 135-residue stretch at 92 to 226 (DTNDAQHARQ…VLSAVMPPPS (135 aa)) folds into the GST C-terminal domain.

Belongs to the GST superfamily.

It participates in secondary metabolite biosynthesis. Its function is as follows. Glutathione S-transferase-like protein; part of the gene cluster that mediates the biosynthesis of geodin, an intermediate in the biosynthesis of other natural products. The pathway begins with the synthesis of atrochrysone thioester by the polyketide synthase (PKS) gedC. The atrochrysone carboxyl ACP thioesterase gedB then breaks the thioester bond and releases the atrochrysone carboxylic acid from gedC. The atrochrysone carboxylic acid is then converted to atrochrysone which is further transformed into emodinanthrone. The next step is performed by the emodinanthrone oxygenase gedH that catalyzes the oxidation of emodinanthrone to emodin. Emodin O-methyltransferase encoded probably by gedA then catalyzes methylation of the 8-hydroxy group of emodin to form questin. Ring cleavage of questin by questin oxidase gedK leads to desmethylsulochrin via several intermediates including questin epoxide. Another methylation step probably catalyzed by methyltransferase gedG leads to the formation of sulochrin which is further converted to dihydrogeodin by the sulochrin halogenase gedL. Finally, the dihydrogeodin oxidase gedJ catalyzes the stereospecific phenol oxidative coupling reaction converting dihydrogeodin to geodin. The polypeptide is Glutathione S-transferase-like protein gedE (Aspergillus terreus (strain NIH 2624 / FGSC A1156)).